Consider the following 343-residue polypeptide: T-cell immunoglobulin and mucin domain-containing protein 4 (343 aa).

The first 22 residues, 1–22, serve as a signal peptide directing secretion; that stretch reads MSKGLLLLWLVTELWWLYLTPA. The 106-residue stretch at 23 to 128 folds into the Ig-like V-type domain; the sequence is ASEDTIIGFL…WFNDVKKNVR (106 aa). Topologically, residues 23–279 are extracellular; it reads ASEDTIIGFL…KSHQINSRQT (257 aa). Disulfide bonds link cysteine 40–cysteine 112, cysteine 53–cysteine 64, and cysteine 59–cysteine 111. Asparagine 220 carries N-linked (GlcNAc...) asparagine glycosylation. A disordered region spans residues 239–258; the sequence is TGSNPGILPSTSQLTTQKTT. The segment covering 248-258 has biased composition (low complexity); it reads STSQLTTQKTT. The helical transmembrane segment at 280–300 threads the bilayer; the sequence is ILIIACCVGFVLMVLLFLAFL. The Cytoplasmic segment spans residues 301-343; sequence LRGKVTGANCLQRHKRPDNTEDSDSVLNDMSHGRDDEDGIFTL. The segment at 313–343 is disordered; that stretch reads RHKRPDNTEDSDSVLNDMSHGRDDEDGIFTL. Phosphoserine is present on residues serine 323, serine 325, and serine 331.

It belongs to the immunoglobulin superfamily. TIM family. Homodimer. As to expression, predominantly expressed in lymphoid tissues, such as spleen, lymph nodes, and Peyer patches. Also expressed in fetal liver, salivary gland, and spleen stromal cells, predominantly in the marginal zone and to a lesser extent throughout the white pulp. Not expressed in bone marrow-derived cells. Expressed mainly by antigen presenting cells (APCs) in T- and B-cell areas, but not by T- or B-lymphocytes.

It is found in the membrane. Phosphatidylserine receptor that plays different role in immune response including phagocytosis of apoptotic cells and T-cell regulation. Controls T-cell activation in a bimodal fashion, decreasing the activation of naive T-cells by inducing cell cycle arrest, while increasing proliferation of activated T-cells by activating AKT1 and ERK1/2 phosphorylations and subsequent signaling pathways. Also plays a role in efferocytosis which is the process by which apoptotic cells are removed by phagocytic cells. Mechanistically, promotes the engulfment of apoptotic cells or exogenous particles by securing them to phagocytes through direct binding to phosphatidylserine present on apoptotic cells, while other engulfment receptors such as MERTK efficiently recognize apoptotic cells and mediate their ingestion. Additionally, promotes autophagy process by suppressing NLRP3 inflammasome activity via activation of STK11/PRKAA1 pathway in a phosphatidylserine-dependent mechanism. This chain is T-cell immunoglobulin and mucin domain-containing protein 4 (Timd4), found in Mus musculus (Mouse).